Here is a 299-residue protein sequence, read N- to C-terminus: Oxygen-dependent coproporphyrinogen-III oxidase (299 aa).

Serine 92 contributes to the substrate binding site. A divalent metal cation is bound by residues histidine 96 and histidine 106. Histidine 106 acts as the Proton donor in catalysis. Substrate is bound at residue 108–110 (NVR). A divalent metal cation-binding residues include histidine 145 and histidine 175. The interval 240–275 (YVEFNLVWDRGTLFGLQTGGRTESILMSMPPLVRWE) is important for dimerization. 258 to 260 (GGR) contributes to the substrate binding site.

It belongs to the aerobic coproporphyrinogen-III oxidase family. In terms of assembly, homodimer. A divalent metal cation is required as a cofactor.

The protein localises to the cytoplasm. It catalyses the reaction coproporphyrinogen III + O2 + 2 H(+) = protoporphyrinogen IX + 2 CO2 + 2 H2O. Its pathway is porphyrin-containing compound metabolism; protoporphyrin-IX biosynthesis; protoporphyrinogen-IX from coproporphyrinogen-III (O2 route): step 1/1. Functionally, involved in the heme biosynthesis. Catalyzes the aerobic oxidative decarboxylation of propionate groups of rings A and B of coproporphyrinogen-III to yield the vinyl groups in protoporphyrinogen-IX. The sequence is that of Oxygen-dependent coproporphyrinogen-III oxidase from Shigella dysenteriae serotype 1 (strain Sd197).